Reading from the N-terminus, the 298-residue chain is ATP phosphoribosyltransferase (298 aa).

Belongs to the ATP phosphoribosyltransferase family. Long subfamily. Mg(2+) is required as a cofactor.

It localises to the cytoplasm. The catalysed reaction is 1-(5-phospho-beta-D-ribosyl)-ATP + diphosphate = 5-phospho-alpha-D-ribose 1-diphosphate + ATP. Its pathway is amino-acid biosynthesis; L-histidine biosynthesis; L-histidine from 5-phospho-alpha-D-ribose 1-diphosphate: step 1/9. Its activity is regulated as follows. Feedback inhibited by histidine. In terms of biological role, catalyzes the condensation of ATP and 5-phosphoribose 1-diphosphate to form N'-(5'-phosphoribosyl)-ATP (PR-ATP). Has a crucial role in the pathway because the rate of histidine biosynthesis seems to be controlled primarily by regulation of HisG enzymatic activity. This Vibrio campbellii (strain ATCC BAA-1116) protein is ATP phosphoribosyltransferase.